A 213-amino-acid chain; its full sequence is Maleylacetoacetate isomerase (213 aa).

In terms of domain architecture, GST N-terminal spans 3–84 (NETVLYDYWR…YLAETRDGTG (82 aa)). The region spanning 89–213 (HPIDRQRVRA…QRAHPDRAKP (125 aa)) is the GST C-terminal domain.

This sequence belongs to the GST superfamily. Zeta family.

The catalysed reaction is 4-maleylacetoacetate = 4-fumarylacetoacetate. It participates in amino-acid degradation; L-phenylalanine degradation; acetoacetate and fumarate from L-phenylalanine: step 5/6. The chain is Maleylacetoacetate isomerase (maiA) from Rhizobium meliloti (strain 1021) (Ensifer meliloti).